Reading from the N-terminus, the 251-residue chain is 1-(5-phosphoribosyl)-5-[(5-phosphoribosylamino)methylideneamino] imidazole-4-carboxamide isomerase (251 aa).

Aspartate 8 functions as the Proton acceptor in the catalytic mechanism. Residue aspartate 131 is the Proton donor of the active site.

The protein belongs to the HisA/HisF family.

The protein resides in the cytoplasm. It catalyses the reaction 1-(5-phospho-beta-D-ribosyl)-5-[(5-phospho-beta-D-ribosylamino)methylideneamino]imidazole-4-carboxamide = 5-[(5-phospho-1-deoxy-D-ribulos-1-ylimino)methylamino]-1-(5-phospho-beta-D-ribosyl)imidazole-4-carboxamide. The protein operates within amino-acid biosynthesis; L-histidine biosynthesis; L-histidine from 5-phospho-alpha-D-ribose 1-diphosphate: step 4/9. This is 1-(5-phosphoribosyl)-5-[(5-phosphoribosylamino)methylideneamino] imidazole-4-carboxamide isomerase from Burkholderia cenocepacia (strain HI2424).